We begin with the raw amino-acid sequence, 132 residues long: Agouti-signaling protein (132 aa).

The N-terminal stretch at 1–22 is a signal peptide; sequence MDVTRLLLATLLVFLCFFTAYS. A glycan (N-linked (GlcNAc...) asparagine) is linked at Asn39. Over residues 61 to 79 the composition is skewed to basic and acidic residues; sequence EISRKEAEKKRSSKKEASM. Positions 61 to 87 are disordered; it reads EISRKEAEKKRSSKKEASMKKVARPRT. 5 disulfides stabilise this stretch: Cys93-Cys108, Cys100-Cys114, Cys107-Cys125, Cys111-Cys132, and Cys116-Cys123. The region spanning 93-132 is the Agouti domain; sequence CVATRDSCKPPAPACCDPCASCQCRFFRSACSCRVLSLNC.

It localises to the secreted. In terms of biological role, involved in the regulation of melanogenesis. The binding of ASP to MC1R precludes alpha-MSH initiated signaling and thus blocks production of cAMP, leading to a down-regulation of eumelanogenesis (brown/black pigment) and thus increasing synthesis of pheomelanin (yellow/red pigment). The sequence is that of Agouti-signaling protein (ASIP) from Macaca fascicularis (Crab-eating macaque).